Consider the following 196-residue polypeptide: Ribonuclease HII (196 aa).

Residues 1–196 (MVTIGVDEAG…FAPVAQLQLL (196 aa)) form the RNase H type-2 domain. The a divalent metal cation site is built by Asp-7, Glu-8, and Asp-103.

Belongs to the RNase HII family. Requires Mn(2+) as cofactor. Mg(2+) is required as a cofactor.

It localises to the cytoplasm. It carries out the reaction Endonucleolytic cleavage to 5'-phosphomonoester.. Its function is as follows. Endonuclease that specifically degrades the RNA of RNA-DNA hybrids. The polypeptide is Ribonuclease HII (Novosphingobium aromaticivorans (strain ATCC 700278 / DSM 12444 / CCUG 56034 / CIP 105152 / NBRC 16084 / F199)).